We begin with the raw amino-acid sequence, 204 residues long: Copper-binding protein CutI (204 aa).

The first 26 residues, 1-26 (MLKKIALTLCPAIVGSLLFFTAPASA), serve as a signal peptide directing secretion. The Cu(2+) site is built by His27 and Glu50. Topologically, residues 27–178 (HVSVKPAESA…DDSENSGSSA (152 aa)) are extracellular. Residues 146–176 (PHSITNITSAKQVTDEHGATKTEDDSENSGS) are disordered. Polar residues predominate over residues 147–157 (HSITNITSAKQ). Basic and acidic residues predominate over residues 158–168 (VTDEHGATKTE). Residues 179 to 199 (LDITAMVLSAAAIILSVAALV) form a helical membrane-spanning segment. Over 200–204 (KKKRA) the chain is Cytoplasmic.

It localises to the cell membrane. Copper-binding protein that probably plays a role in copper homeostasis. May act as metallochaperone, possibly to facilitate copper uptake via the CutJ/YcnJ importer. Preferentially binds Cu in its oxidized Cu(II) state in a 1:1 stoichiometry. The polypeptide is Copper-binding protein CutI (Bacillus subtilis (strain 168)).